The chain runs to 309 residues: Cytidine deaminase (309 aa).

2 consecutive CMP/dCMP-type deaminase domains span residues D48–R168 and D200–L309. N89–E91 contributes to the substrate binding site. H102 provides a ligand contact to Zn(2+). E104 serves as the catalytic Proton donor. C129 and C132 together coordinate Zn(2+).

The protein belongs to the cytidine and deoxycytidylate deaminase family. As to quaternary structure, homodimer. It depends on Zn(2+) as a cofactor.

The enzyme catalyses cytidine + H2O + H(+) = uridine + NH4(+). It catalyses the reaction 2'-deoxycytidine + H2O + H(+) = 2'-deoxyuridine + NH4(+). This enzyme scavenges exogenous and endogenous cytidine and 2'-deoxycytidine for UMP synthesis. This is Cytidine deaminase from Sodalis glossinidius (strain morsitans).